Reading from the N-terminus, the 377-residue chain is Succinyl-diaminopimelate desuccinylase (377 aa).

His67 lines the Zn(2+) pocket. The active site involves Asp69. Asp100 contacts Zn(2+). Catalysis depends on Glu134, which acts as the Proton acceptor. The Zn(2+) site is built by Glu135, Glu163, and His349.

Belongs to the peptidase M20A family. DapE subfamily. Homodimer. Zn(2+) serves as cofactor. It depends on Co(2+) as a cofactor.

The enzyme catalyses N-succinyl-(2S,6S)-2,6-diaminopimelate + H2O = (2S,6S)-2,6-diaminopimelate + succinate. It participates in amino-acid biosynthesis; L-lysine biosynthesis via DAP pathway; LL-2,6-diaminopimelate from (S)-tetrahydrodipicolinate (succinylase route): step 3/3. Catalyzes the hydrolysis of N-succinyl-L,L-diaminopimelic acid (SDAP), forming succinate and LL-2,6-diaminopimelate (DAP), an intermediate involved in the bacterial biosynthesis of lysine and meso-diaminopimelic acid, an essential component of bacterial cell walls. This Mannheimia succiniciproducens (strain KCTC 0769BP / MBEL55E) protein is Succinyl-diaminopimelate desuccinylase.